The following is a 519-amino-acid chain: Pleckstrin homology domain-containing family A member 8 (519 aa).

The region spanning 1-93 (MEGVLYKWTN…WLVALGSAKA (93 aa)) is the PH domain. At Thr-139 the chain carries Phosphothreonine. Ser-145 is modified (phosphoserine). At Thr-153 the chain carries Phosphothreonine. A glycolipid transfer protein homology domain region spans residues 310–519 (TFFSTMNTSF…VHGLESDEVV (210 aa)).

In terms of assembly, homodimer. Interacts with ARF1; the interaction together with phosphatidylinositol 4-phosphate binding is required for FAPP2 GlcCer transfer ability. Expressed in kidney cell lines.

It is found in the golgi apparatus. Its subcellular location is the trans-Golgi network membrane. The protein resides in the membrane. Cargo transport protein that is required for apical transport from the Golgi complex. Transports AQP2 from the trans-Golgi network (TGN) to sites of AQP2 phosphorylation. Mediates the non-vesicular transport of glucosylceramide (GlcCer) from the trans-Golgi network (TGN) to the plasma membrane and plays a pivotal role in the synthesis of complex glycosphingolipids. Binding of both phosphatidylinositol 4-phosphate (PIP) and ARF1 are essential for the GlcCer transfer ability. Also required for primary cilium formation, possibly by being involved in the transport of raft lipids to the apical membrane, and for membrane tubulation. The chain is Pleckstrin homology domain-containing family A member 8 (PLEKHA8) from Homo sapiens (Human).